Reading from the N-terminus, the 345-residue chain is MVSSNFYKNLGPRKLTAIIDFLHDIIAPPKIEDIAIHDIKILQEASPNDISFLSNPKYSEFLKTTKAAACIVPKNFTGEANPNTVLLHAQNSYFAYGKLIDFFYAPIKSYPTKIMKSAIVADSATIGKNCYIGHNVVIEDDVIIGDNSIIEAGSFIGRGVNIGRNARIEQHVSINYAIIGDDVVILAGAKIGQDGFGFSTEKGVHHKIFHIGIVKIGNNVEIGANTTIDRGSLQDTIIKDLCRIDNLVQIGHGVKIGKGSIIVAQTGIAGSSTIGKYCALGGQVGIAGHLNIGDGAQVAAQGGVAQNIEAGKIVGGSPAIPIMDWHRQSIIMKQLLKTSNSKLKK.

His252 serves as the catalytic Proton acceptor.

Belongs to the transferase hexapeptide repeat family. LpxD subfamily. Homotrimer.

The catalysed reaction is a UDP-3-O-[(3R)-3-hydroxyacyl]-alpha-D-glucosamine + a (3R)-hydroxyacyl-[ACP] = a UDP-2-N,3-O-bis[(3R)-3-hydroxyacyl]-alpha-D-glucosamine + holo-[ACP] + H(+). It functions in the pathway bacterial outer membrane biogenesis; LPS lipid A biosynthesis. Functionally, catalyzes the N-acylation of UDP-3-O-acylglucosamine using 3-hydroxyacyl-ACP as the acyl donor. Is involved in the biosynthesis of lipid A, a phosphorylated glycolipid that anchors the lipopolysaccharide to the outer membrane of the cell. This chain is UDP-3-O-acylglucosamine N-acyltransferase, found in Rickettsia rickettsii.